A 486-amino-acid polypeptide reads, in one-letter code: Probable transporter MCH1 (486 aa).

Topologically, residues 1–29 (MPLSKVEHYLSYHTRLLLPHVLSLQSSHR) are cytoplasmic. Residues 30–50 (VAYIFSLLSAVSTGFITLISL) traverse the membrane as a helical segment. Residues 51–67 (YSQPWQKHLNYSSWQIN) lie on the Vacuolar side of the membrane. N-linked (GlcNAc...) asparagine glycosylation occurs at Asn-60. Residues 68–88 (TIASMTNLGMYLTPPILGMIA) form a helical membrane-spanning segment. Residues 89–93 (DSHGP) are Cytoplasmic-facing. A helical membrane pass occupies residues 94–114 (ITLSLLAIIGFIPSYSYLAYV). At 115-133 (FNHPELSLGGNGDSSFNLS) the chain is on the vacuolar side. N-linked (GlcNAc...) asparagine glycosylation occurs at Asn-131. The chain crosses the membrane as a helical span at residues 134–154 (IICFVFIGISTSALYFSALLT). Topologically, residues 155–163 (CTKLYPHTK) are cytoplasmic. Residues 164 to 184 (LLSISLPTTCYGISSVVGSQL) traverse the membrane as a helical segment. The Vacuolar segment spans residues 185–212 (LRIKWFWSSNASSSSSNSDLNLGRVFQT). The N-linked (GlcNAc...) asparagine glycan is linked to Asn-194. A helical membrane pass occupies residues 213-233 (FALVYVVIGLLAWIATSVVSL). The Cytoplasmic segment spans residues 234–279 (LHFNEEQDNQKRLDDQTDVEQSPLLERSNHVQEKFTQTMLRIFSDP). Position 255 is a phosphoserine (Ser-255). A helical membrane pass occupies residues 280 to 300 (VTYILAVSILLSLGPLEMFIA). Topologically, residues 301-320 (NMGSLTNLLVQLDAPTLSTK) are vacuolar. The helical transmembrane segment at 321 to 343 (LLSTYALSSTFTRLLTGIVADFF) threads the bilayer. The Cytoplasmic portion of the chain corresponds to 344 to 347 (AKKK). Residues 348–368 (ISIKWILLTFLSLGVCAQLFL) traverse the membrane as a helical segment. The Vacuolar segment spans residues 369-385 (LKMTSSASPWGLVPTGS). The helical transmembrane segment at 386-406 (LVGIVYGGLFTVYPTLVLLVW) threads the bilayer. Over 407-413 (GERSFGT) the chain is Cytoplasmic. Residues 414–434 (VYGSLLIAPAIGSMIFCMLYA) form a helical membrane-spanning segment. Over 435–456 (KFYDSRCMSGGGDLRNPSCISA) the chain is Vacuolar. The helical transmembrane segment at 457 to 477 (VYKYSSIAFVVSAVLSAVVFW) threads the bilayer. Over 478–486 (KLKSRKLRI) the chain is Cytoplasmic.

This sequence belongs to the major facilitator superfamily.

It is found in the vacuole membrane. Its function is as follows. Probable transporter. Does not act in the transport of monocarboxylic acids across the plasma membrane. This Saccharomyces cerevisiae (strain ATCC 204508 / S288c) (Baker's yeast) protein is Probable transporter MCH1 (MCH1).